The sequence spans 210 residues: Thymidylate kinase (210 aa).

Gly-10–Ser-17 is an ATP binding site.

Belongs to the thymidylate kinase family.

The enzyme catalyses dTMP + ATP = dTDP + ADP. In terms of biological role, phosphorylation of dTMP to form dTDP in both de novo and salvage pathways of dTTP synthesis. The sequence is that of Thymidylate kinase from Pseudomonas savastanoi pv. phaseolicola (strain 1448A / Race 6) (Pseudomonas syringae pv. phaseolicola (strain 1448A / Race 6)).